A 56-amino-acid chain; its full sequence is MAVPKRRTSRSNTRSRRAQWKAKAPALAKCSRGHTIRPHTMCPTCGRYNDRQVLDV.

Positions 1–20 (MAVPKRRTSRSNTRSRRAQW) are enriched in basic residues. The disordered stretch occupies residues 1 to 26 (MAVPKRRTSRSNTRSRRAQWKAKAPA).

The protein belongs to the bacterial ribosomal protein bL32 family.

The polypeptide is Large ribosomal subunit protein bL32 (Parafrankia sp. (strain EAN1pec)).